Consider the following 753-residue polypeptide: 5-methyltetrahydropteroyltriglutamate--homocysteine methyltransferase (753 aa).

Residues R17 to K20 and K117 contribute to the 5-methyltetrahydropteroyltri-L-glutamate site. L-homocysteine contacts are provided by residues I431–S433 and E484. L-methionine-binding positions include I431–S433 and E484. Residues R515–C516 and W561 contribute to the 5-methyltetrahydropteroyltri-L-glutamate site. D599 lines the L-homocysteine pocket. L-methionine is bound at residue D599. E605 is a 5-methyltetrahydropteroyltri-L-glutamate binding site. Positions 641, 643, and 665 each coordinate Zn(2+). The active-site Proton donor is H694. C726 lines the Zn(2+) pocket.

Belongs to the vitamin-B12 independent methionine synthase family. It depends on Zn(2+) as a cofactor.

The catalysed reaction is 5-methyltetrahydropteroyltri-L-glutamate + L-homocysteine = tetrahydropteroyltri-L-glutamate + L-methionine. Its pathway is amino-acid biosynthesis; L-methionine biosynthesis via de novo pathway; L-methionine from L-homocysteine (MetE route): step 1/1. Functionally, catalyzes the transfer of a methyl group from 5-methyltetrahydrofolate to homocysteine resulting in methionine formation. This is 5-methyltetrahydropteroyltriglutamate--homocysteine methyltransferase from Escherichia coli O1:K1 / APEC.